Here is a 410-residue protein sequence, read N- to C-terminus: Probable serine/threonine-protein kinase PBL9 (410 aa).

G2 carries the N-myristoyl glycine lipid modification. The S-palmitoyl cysteine moiety is linked to residue C4. Residues A11–E46 are disordered. A Protein kinase domain is found at F68–H352. ATP is bound by residues L74–V82 and K106. Residue Y151 is modified to Phosphotyrosine. D203 acts as the Proton acceptor in catalysis. Phosphoserine is present on residues S207 and S237. A phosphothreonine mark is found at T238 and T243. Y251 bears the Phosphotyrosine mark.

This sequence belongs to the protein kinase superfamily. Ser/Thr protein kinase family. Interacts with the Xanthomonas campestris effector XopAC/AvrAC. Expressed in stomatal guard cells of leaves.

The protein resides in the cell membrane. The catalysed reaction is L-seryl-[protein] + ATP = O-phospho-L-seryl-[protein] + ADP + H(+). It catalyses the reaction L-threonyl-[protein] + ATP = O-phospho-L-threonyl-[protein] + ADP + H(+). In terms of biological role, possible bi-functional kinase. In vitro, it exhibits serine/threonine activity. In vivo, can phosphorylate tyrosine residues of limited substrates. May be involved in plant defense signaling. The chain is Probable serine/threonine-protein kinase PBL9 from Arabidopsis thaliana (Mouse-ear cress).